The sequence spans 400 residues: Dual specificity mitogen-activated protein kinase kinase 2 (400 aa).

An N-acetylmethionine modification is found at methionine 1. Position 23 is a phosphoserine (serine 23). The 298-residue stretch at 72–369 (FERISELGAG…LKLLTNHAFI (298 aa)) folds into the Protein kinase domain. ATP is bound by residues 78 to 86 (LGAGNGGVV) and lysine 101. Aspartate 194 functions as the Proton acceptor in the catalytic mechanism. 2 positions are modified to phosphoserine; by RAF: serine 222 and serine 226. The disordered stretch occupies residues 282 to 310 (PVVDGADGEPHSVSPRPRPPGRPISGHGM). 3 positions are modified to phosphoserine: serine 293, serine 295, and serine 306. A phosphothreonine mark is found at threonine 394 and threonine 396.

Belongs to the protein kinase superfamily. STE Ser/Thr protein kinase family. MAP kinase kinase subfamily. Interacts with MORG1. Interacts with SGK1. Interacts with KSR1. Interacts with KSR1 and BRAF; the interaction with KSR1 mediates KSR1-BRAF dimerization. Interacts with GLS. It depends on Mg(2+) as a cofactor. MAPKK is itself dependent on Ser/Thr phosphorylation for activity catalyzed by MAP kinase kinase kinases (RAF or MEKK1). Phosphorylated by MAP2K1/MEK1. Expressed abundantly in the adult brain and muscle.

It is found in the cytoplasm. The protein localises to the membrane. It carries out the reaction L-seryl-[protein] + ATP = O-phospho-L-seryl-[protein] + ADP + H(+). It catalyses the reaction L-threonyl-[protein] + ATP = O-phospho-L-threonyl-[protein] + ADP + H(+). The enzyme catalyses L-tyrosyl-[protein] + ATP = O-phospho-L-tyrosyl-[protein] + ADP + H(+). Catalyzes the concomitant phosphorylation of a threonine and a tyrosine residue in a Thr-Glu-Tyr sequence located in MAP kinases. Activates the ERK1 and ERK2 MAP kinases. Activates BRAF in a KSR1 or KSR2-dependent manner; by binding to KSR1 or KSR2 releases the inhibitory intramolecular interaction between KSR1 or KSR2 protein kinase and N-terminal domains which promotes KSR1 or KSR2-BRAF dimerization and BRAF activation. The polypeptide is Dual specificity mitogen-activated protein kinase kinase 2 (Map2k2) (Rattus norvegicus (Rat)).